A 344-amino-acid polypeptide reads, in one-letter code: MIKVGVVGYGTIGKRIADAVALQDDMRVVGVVKMTPDYEAKIAAARGFPVYTAADRVEKFKKAGIEVAGTVEDLVKASDVVVDASPEDVGRENKEKYYRQLDKRYIFQGGEEADVAEVSFNALANYDEARGKRYIRVVSCNTTGITRVLSALLLNGIGIRKARIFIARRGADPKEHKKGPINDVVPNPTAVPSHHGPDVQTVLKDVDIVTMAVAVPVTIMHMHMAYIELDGPRSRDEVLEAFAKTPRIFLADVGSGFQSLAQFIEYARDLGRPRGDFPEVAVFRDSVTVRGDELYLMYGVHQESIVVPENVDAIRAALGVLPKWQSIEKTDKSLKLFTEGKRYA.

Residues threonine 11–isoleucine 12 and glycine 110 each bind NAD(+). D-glyceraldehyde 3-phosphate is bound at residue serine 139–asparagine 141. Residue cysteine 140 is the Nucleophile of the active site. Residue arginine 169 participates in NAD(+) binding. Position 195-196 (histidine 195–glycine 196) interacts with D-glyceraldehyde 3-phosphate. An NAD(+)-binding site is contributed by glutamine 302.

The protein belongs to the glyceraldehyde-3-phosphate dehydrogenase family. In terms of assembly, homotetramer.

It localises to the cytoplasm. The catalysed reaction is D-glyceraldehyde 3-phosphate + phosphate + NADP(+) = (2R)-3-phospho-glyceroyl phosphate + NADPH + H(+). It catalyses the reaction D-glyceraldehyde 3-phosphate + phosphate + NAD(+) = (2R)-3-phospho-glyceroyl phosphate + NADH + H(+). It functions in the pathway carbohydrate degradation; glycolysis; pyruvate from D-glyceraldehyde 3-phosphate: step 1/5. In Pyrobaculum calidifontis (strain DSM 21063 / JCM 11548 / VA1), this protein is Glyceraldehyde-3-phosphate dehydrogenase.